The following is a 624-amino-acid chain: Sodium/potassium/calcium exchanger 3 (624 aa).

The N-terminal stretch at 1–25 (RDLLLSQLCFLASVALLLWSLSSLR) is a signal peptide. Over 26-88 (EQKELDLMDL…DIFSNEDRRQ (63 aa)) the chain is Extracellular. N-linked (GlcNAc...) asparagine glycans are attached at residues Asn52 and Asn67. The chain crosses the membrane as a helical span at residues 89 to 109 (GAVVLHVLCAMYMFYALAIVC). The Cytoplasmic portion of the chain corresponds to 110 to 133 (DDFFVPSLEKICERLHLSEDVAGA). Residues 130–170 (VAGATFMAAGSSAPELFTSVIGVFITKGDVGVGTIVGSAVF) form an Alpha-1 repeat. A helical membrane pass occupies residues 134-154 (TFMAAGSSAPELFTSVIGVFI). The Extracellular portion of the chain corresponds to 155–163 (TKGDVGVGT). Residues 164–184 (IVGSAVFNILCIIGVCGLFAG) traverse the membrane as a helical segment. Residues 185–191 (QVVALSS) are Cytoplasmic-facing. The helical transmembrane segment at 192–212 (WCLLRDSIYYTLSVVALIVFI) threads the bilayer. The Extracellular segment spans residues 213-215 (YDE). The chain crosses the membrane as a helical span at residues 216–236 (KVSWWESLVLVLMYLIYIIIM). Residues 237–465 (KYNACIHQCF…WFMVTFASST (229 aa)) lie on the Cytoplasmic side of the membrane. Residue Ser289 is modified to Phosphoserine. The segment covering 386 to 414 (AEADNETENENEDENNENDEEEDEDDDEG) has biased composition (acidic residues). The disordered stretch occupies residues 386–421 (AEADNETENENEDENNENDEEEDEDDDEGPYTPFDP). A helical transmembrane segment spans residues 466-486 (LWIAAFSYMMVWMVTIIGYTL). Residues 487–491 (GIPDV) are Extracellular-facing. The chain crosses the membrane as a helical span at residues 492–512 (IMGITFLAAGTSVPDCMASLI). The stretch at 499–530 (AAGTSVPDCMASLIVARQGMGDMAVSNSIGSN) is one Alpha-2 repeat. At 513–530 (VARQGMGDMAVSNSIGSN) the chain is on the cytoplasmic side. The helical transmembrane segment at 531–551 (VFDILIGLGLPWALQTLAVDY) threads the bilayer. The Extracellular segment spans residues 552 to 561 (GSYIRLNSRG). Residues 562-582 (LIYSVGLLLASVFVTVFGVHL) traverse the membrane as a helical segment. The Cytoplasmic segment spans residues 583–596 (NKWQLDKKLGCGCL). Residues 597 to 617 (FLYGVFLCFSIMTEFNVFTFV) form a helical membrane-spanning segment. Topologically, residues 618 to 624 (NLPMCGD) are extracellular.

This sequence belongs to the Ca(2+):cation antiporter (CaCA) (TC 2.A.19) family. SLC24A subfamily. As to expression, abundant in the brain. Expressed at low levels in the aorta, uterus and intestine.

It localises to the cell membrane. It catalyses the reaction Ca(2+)(out) + K(+)(out) + 4 Na(+)(in) = Ca(2+)(in) + K(+)(in) + 4 Na(+)(out). Calcium, potassium:sodium antiporter that transports 1 Ca(2+) and 1 K(+) in exchange for 4 Na(+). The sequence is that of Sodium/potassium/calcium exchanger 3 (Slc24a3) from Rattus norvegicus (Rat).